The sequence spans 273 residues: Undecaprenyl-diphosphatase (273 aa).

Helical transmembrane passes span leucine 46–tyrosine 63, phenylalanine 83–lysine 103, leucine 109–valine 129, alanine 184–leucine 204, alanine 218–leucine 238, and phenylalanine 249–valine 269.

The protein belongs to the UppP family.

It is found in the cell inner membrane. It carries out the reaction di-trans,octa-cis-undecaprenyl diphosphate + H2O = di-trans,octa-cis-undecaprenyl phosphate + phosphate + H(+). Catalyzes the dephosphorylation of undecaprenyl diphosphate (UPP). Confers resistance to bacitracin. The protein is Undecaprenyl-diphosphatase of Methylococcus capsulatus (strain ATCC 33009 / NCIMB 11132 / Bath).